A 713-amino-acid chain; its full sequence is MKRFMKLTAVWTLWLSLTLGLLSPVHAAPDTSVSNKQNFSTDVIYQIFTDRFSDGNPANNPTGAAFDGSCTNLRLYCGGDWQGIINKINDGYLTGMGITAIWISQPVENIYSVINYSGVNNTAYHGYWARDFKKTNPAYGTMQDFKNLIDTAHAHNIKVIIDFAPNHTSPASSDDPSFAENGRLYDNGNLLGGYTNDTQNLFHHYGGTDFSTIENGIYKNLYDLADLNHNNSSVDVYLKDAIKMWLDLGVDGIRVDAVKHMPFGWQKSFMATINNYKPVFTFGEWFLGVNEISPEYHQFANESGMSLLDFRFAQKARQVFRDNTDNMYGLKAMLEGSEVDYAQVNDQVTFIDNHDMERFHTSNGDRRKLEQALAFTLTSRGVPAIYYGSEQYMSGGNDPDNRARLPSFSTTTTAYQVIQKLAPLRKSNPAIAYGSTHERWINNDVIIYERKFGNNVAVVAINRNMNTPASITGLVTSLRRASYNDVLGGILNGNTLTVGAGGAASNFTLAPGGTAVWQYTTDATTPIIGNVGPMMAKPGVTITIDGRGFGSGKGTVYFGTTAVTGADIVAWEDTQIQVKIPAVPGGIYDIRVANAAGAASNIYDNFEVLTGDQVTVRFVINNATTALGQNVFLTGNVSELGNWDPNNAIGPMYNQVVYQYPTWYYDVSVPAGQTIEFKFLKKQGSTVTWEGGANRTFTTPTSGTATVNVNWQP.

The signal sequence occupies residues 1-27 (MKRFMKLTAVWTLWLSLTLGLLSPVHA). Residues 28–165 (APDTSVSNKQ…NIKVIIDFAP (138 aa)) form an A1 region. Positions 54, 56, 59, and 60 each coordinate Ca(2+). A disulfide bond links cysteine 70 and cysteine 77. The Ca(2+) site is built by glycine 78 and aspartate 80. 127 to 128 (YW) contacts substrate. Residue asparagine 166 participates in Ca(2+) binding. Residues 166–229 (NHTSPASSDD…NLYDLADLNH (64 aa)) are b. Histidine 167 is a substrate binding site. Isoleucine 217 contributes to the Ca(2+) binding site. 220–223 (NLYD) is a binding site for substrate. Position 226 (aspartate 226) interacts with Ca(2+). An A2 region spans residues 230–433 (NNSSVDVYLK…LRKSNPAIAY (204 aa)). Substrate is bound at residue arginine 254. Catalysis depends on aspartate 256, which acts as the Nucleophile. Residue 259 to 260 (KH) coordinates substrate. Histidine 260 provides a ligand contact to Ca(2+). Glutamate 284 (proton donor) is an active-site residue. Residues histidine 354, aspartate 398, and arginine 402 each coordinate substrate. The tract at residues 434–522 (GSTHERWINN…GTAVWQYTTD (89 aa)) is c. A d region spans residues 523–609 (ATTPIIGNVG…SNIYDNFEVL (87 aa)). The region spanning 526 to 607 (PIIGNVGPMM…AASNIYDNFE (82 aa)) is the IPT/TIG domain. The region spanning 608–713 (VLTGDQVTVR…TATVNVNWQP (106 aa)) is the CBM20 domain. Residues 610–713 (TGDQVTVRFV…TATVNVNWQP (104 aa)) form an e region.

The protein belongs to the glycosyl hydrolase 13 family. As to quaternary structure, monomer. It depends on Ca(2+) as a cofactor.

Its subcellular location is the secreted. The catalysed reaction is Cyclizes part of a (1-&gt;4)-alpha-D-glucan chain by formation of a (1-&gt;4)-alpha-D-glucosidic bond.. The chain is Cyclomaltodextrin glucanotransferase (cgt) from Bacillus sp. (strain 1011).